The primary structure comprises 107 residues: Sperm-specific class P protein 34 (107 aa).

The disordered stretch occupies residues 1–26 (MINVDPPTGNYPATGGNSTHNITSES). In terms of domain architecture, MSP spans 1 to 107 (MINVDPPTGN…GEIIVKLIAA (107 aa)). The segment covering 15–25 (GGNSTHNITSE) has biased composition (polar residues).

In terms of tissue distribution, expressed at higher level in testis.

This chain is Sperm-specific class P protein 34 (ssp-34), found in Caenorhabditis elegans.